The following is a 452-amino-acid chain: Tubulin alpha-6 chain (452 aa).

Residues Gln11, Glu69, Ser138, Gly142, Thr143, Thr177, Asn204, and Asn226 each contribute to the GTP site. Glu69 is a Mg(2+) binding site. Glu252 is an active-site residue.

The protein belongs to the tubulin family. As to quaternary structure, dimer of alpha and beta chains. A typical microtubule is a hollow water-filled tube with an outer diameter of 25 nm and an inner diameter of 15 nM. Alpha-beta heterodimers associate head-to-tail to form protofilaments running lengthwise along the microtubule wall with the beta-tubulin subunit facing the microtubule plus end conferring a structural polarity. Microtubules usually have 13 protofilaments but different protofilament numbers can be found in some organisms and specialized cells. Requires Mg(2+) as cofactor.

Its subcellular location is the cytoplasm. The protein resides in the cytoskeleton. It is found in the spindle. It carries out the reaction GTP + H2O = GDP + phosphate + H(+). In terms of biological role, tubulin is the major constituent of microtubules, a cylinder consisting of laterally associated linear protofilaments composed of alpha- and beta-tubulin heterodimers. Microtubules grow by the addition of GTP-tubulin dimers to the microtubule end, where a stabilizing cap forms. Below the cap, tubulin dimers are in GDP-bound state, owing to GTPase activity of alpha-tubulin. This is Tubulin alpha-6 chain (TUBA6) from Naegleria pringsheimi (Amoeba).